A 122-amino-acid polypeptide reads, in one-letter code: Large ribosomal subunit protein uL14 (122 aa).

The protein belongs to the universal ribosomal protein uL14 family. As to quaternary structure, part of the 50S ribosomal subunit. Forms a cluster with proteins L3 and L19. In the 70S ribosome, L14 and L19 interact and together make contacts with the 16S rRNA in bridges B5 and B8.

Its function is as follows. Binds to 23S rRNA. Forms part of two intersubunit bridges in the 70S ribosome. This chain is Large ribosomal subunit protein uL14, found in Chlorobium phaeobacteroides (strain DSM 266 / SMG 266 / 2430).